A 710-amino-acid polypeptide reads, in one-letter code: Prolyl endopeptidase (710 aa).

Residue M1 is modified to N-acetylmethionine. K157 carries the post-translational modification N6-acetyllysine. Residues S554, D641, and H680 each act as charge relay system in the active site.

It belongs to the peptidase S9A family.

Its subcellular location is the cytoplasm. The catalysed reaction is Hydrolysis of Pro-|-Xaa &gt;&gt; Ala-|-Xaa in oligopeptides.. In terms of biological role, cleaves peptide bonds on the C-terminal side of prolyl residues within peptides that are up to approximately 30 amino acids long. The polypeptide is Prolyl endopeptidase (Prep) (Mus musculus (Mouse)).